Reading from the N-terminus, the 508-residue chain is RanBP-type and C3HC4-type zinc finger-containing protein 1 (508 aa).

N-acetylmethionine is present on Met1. Residues 1–218 (MDEKTKKAEE…PGCEMCCRAR (218 aa)) form an interaction with IRF3 region. The segment at 1 to 268 (MDEKTKKAEE…NYLQHVQLEQ (268 aa)) is interaction with TAB2. Ser50 carries the post-translational modification Phosphoserine. The region spanning 55-119 (IRLCVSVEDA…DQETLHSHGI (65 aa)) is the Ubiquitin-like domain. An interaction with RNF31 region spans residues 69–131 (VTIWLTVRPD…NGDGAYLYLL (63 aa)). The interval 163–191 (QSRGPLEPVLPKPRTNQEPGQPDAAPESP) is disordered. The segment at 188–220 (PESPPVGWQCPGCTFINKPTRPGCEMCCRARPE) adopts a RanBP2-type zinc-finger fold. A coiled-coil region spans residues 231 to 259 (DEEERARLAGEEEALRQYQQRKQQQQEGN). Positions 276–504 (EPTECPVCYS…VNGIPCHPSC (229 aa)) are TRIAD supradomain. Residues Cys280, Cys283, Cys298, His300, Cys303, Cys306, and Cys321 each contribute to the Zn(2+) site. The RING-type 1 zinc-finger motif lies at 280–330 (CPVCYSVLAPGEAVVLRECLHTFCRECLQGTIRNSQEAEVACPFIDSTYSC). The residue at position 328 (Tyr328) is a Phosphotyrosine. Zn(2+) is bound by residues Cys330, Cys369, Cys374, Cys389, Cys392, Cys397, Cys400, His404, Cys409, Cys445, and Cys448. An IBR-type zinc finger spans residues 349-409 (QRFLDLGVSI…CKAIHEHMNC (61 aa)). The segment at 445–474 (CPQCRIVVQKKDGCDWIRCTVCHTEICWVT) adopts an RING-type 2; atypical zinc-finger fold. Residue Cys458 is part of the active site. Positions 463 and 466 each coordinate Zn(2+).

This sequence belongs to the RBR family. Component of the LUBAC complex (linear ubiquitin chain assembly complex) which consists of SHARPIN, RBCK1 and RNF31. LUBAC has a MW of approximately 600 kDa suggesting a heteromultimeric assembly of its subunits. Interacts with beta-I-type (PRKCB1) and zeta-type protein kinase C (PRKCZ). Interacts with UBE2L3. Interacts with IREB2 only in iron-rich conditions. Associates with the TNF-R1 signaling complex (TNF-RSC) in a stimulation-dependent manner. Interacts with EYA1, TAB2, TAB3, MAP3K7 TRAF6 and RIPK1. Interacts with IRF3. Auto-ubiquitinated. Auto-ubiquitination leads to degradation by the proteasome. In terms of processing, phosphorylated. In vitro, phosphorylation inhibits auto-ubiquitination activity.

The enzyme catalyses [E2 ubiquitin-conjugating enzyme]-S-ubiquitinyl-L-cysteine + [acceptor protein]-L-lysine = [E2 ubiquitin-conjugating enzyme]-L-cysteine + [acceptor protein]-N(6)-ubiquitinyl-L-lysine.. It functions in the pathway protein modification; protein ubiquitination. Its function is as follows. E3 ubiquitin-protein ligase, which accepts ubiquitin from specific E2 ubiquitin-conjugating enzymes, such as UBE2L3/UBCM4, and then transfers it to substrates. Functions as an E3 ligase for oxidized IREB2 and both heme and oxygen are necessary for IREB2 ubiquitination. Promotes ubiquitination of TAB2 and IRF3 and their degradation by the proteasome. Component of the LUBAC complex which conjugates linear ('Met-1'-linked) polyubiquitin chains to substrates and plays a key role in NF-kappa-B activation and regulation of inflammation. LUBAC conjugates linear polyubiquitin to IKBKG and RIPK1 and is involved in activation of the canonical NF-kappa-B and the JNK signaling pathways. Linear ubiquitination mediated by the LUBAC complex interferes with TNF-induced cell death and thereby prevents inflammation. LUBAC is recruited to the TNF-R1 signaling complex (TNF-RSC) following polyubiquitination of TNF-RSC components by BIRC2 and/or BIRC3 and to conjugate linear polyubiquitin to IKBKG and possibly other components contributing to the stability of the complex. The LUBAC complex is also involved in innate immunity by conjugating linear polyubiquitin chains at the surface of bacteria invading the cytosol to form the ubiquitin coat surrounding bacteria. LUBAC is not able to initiate formation of the bacterial ubiquitin coat, and can only promote formation of linear polyubiquitins on pre-existing ubiquitin. The bacterial ubiquitin coat acts as an 'eat-me' signal for xenophagy and promotes NF-kappa-B activation. Together with OTULIN, the LUBAC complex regulates the canonical Wnt signaling during angiogenesis. Binds polyubiquitin of different linkage types. The protein is RanBP-type and C3HC4-type zinc finger-containing protein 1 (Rbck1) of Mus musculus (Mouse).